Consider the following 68-residue polypeptide: uncharacterized protein (68 aa).

Residues 1–15 (MTIIFLICLDASTQS) form the signal peptide. The interval 14 to 68 (QSTTNNSINNNNNNNNNNNNNNNNNNNNNNNNNNNNNNNNNNNNNNSKVFDFNIF) is disordered. Residues asparagine 18 and asparagine 58 are each glycosylated (N-linked (GlcNAc...) asparagine). Over residues 22–59 (NNNNNNNNNNNNNNNNNNNNNNNNNNNNNNNNNNNNNN) the composition is skewed to low complexity.

It is found in the secreted. This is an uncharacterized protein from Dictyostelium discoideum (Social amoeba).